The chain runs to 295 residues: Large ribosomal subunit protein uL15m (295 aa).

Residues 1–20 (MAGTARGCGTSLDLLRSLPR) constitute a mitochondrion transit peptide. The disordered stretch occupies residues 21-67 (VSLANLKPSPNSRKRERRPRDRRRGRKCGRGHKGERQRGTRPRLGFE). Positions 32–51 (SRKRERRPRDRRRGRKCGRG) are enriched in basic residues.

The protein belongs to the universal ribosomal protein uL15 family. In terms of assembly, component of the mitochondrial ribosome large subunit (39S) which comprises a 16S rRNA and about 50 distinct proteins.

The protein localises to the mitochondrion. The chain is Large ribosomal subunit protein uL15m (Mrpl15) from Mus musculus (Mouse).